Reading from the N-terminus, the 424-residue chain is CinA-like protein (424 aa).

The protein belongs to the CinA family.

This chain is CinA-like protein, found in Prochlorococcus marinus (strain MIT 9215).